Here is a 143-residue protein sequence, read N- to C-terminus: ATP synthase subunit b' (143 aa).

Residues 6 to 26 (ATLPLMALQFLVLAVVLNAVF) form a helical membrane-spanning segment.

Belongs to the ATPase B chain family. In terms of assembly, F-type ATPases have 2 components, F(1) - the catalytic core - and F(0) - the membrane proton channel. F(1) has five subunits: alpha(3), beta(3), gamma(1), delta(1), epsilon(1). F(0) has four main subunits: a(1), b(1), b'(1) and c(10-14). The alpha and beta chains form an alternating ring which encloses part of the gamma chain. F(1) is attached to F(0) by a central stalk formed by the gamma and epsilon chains, while a peripheral stalk is formed by the delta, b and b' chains.

The protein localises to the cellular thylakoid membrane. Functionally, f(1)F(0) ATP synthase produces ATP from ADP in the presence of a proton or sodium gradient. F-type ATPases consist of two structural domains, F(1) containing the extramembraneous catalytic core and F(0) containing the membrane proton channel, linked together by a central stalk and a peripheral stalk. During catalysis, ATP synthesis in the catalytic domain of F(1) is coupled via a rotary mechanism of the central stalk subunits to proton translocation. In terms of biological role, component of the F(0) channel, it forms part of the peripheral stalk, linking F(1) to F(0). The b'-subunit is a diverged and duplicated form of b found in plants and photosynthetic bacteria. This chain is ATP synthase subunit b', found in Gloeothece citriformis (strain PCC 7424) (Cyanothece sp. (strain PCC 7424)).